The chain runs to 112 residues: MAAQTSIRRKLRARRKVRIAAGERPRLSVFRSSKHIYAQIIDDKNGTTLAAASSAVVKAGNKTDTAAAVGKALAEAASAKGVKQVVFDRGQYKYHGRVKALADAAREGGLDF.

Belongs to the universal ribosomal protein uL18 family. As to quaternary structure, part of the 50S ribosomal subunit; part of the 5S rRNA/L5/L18/L25 subcomplex. Contacts the 5S and 23S rRNAs.

This is one of the proteins that bind and probably mediate the attachment of the 5S RNA into the large ribosomal subunit, where it forms part of the central protuberance. The chain is Large ribosomal subunit protein uL18 from Deinococcus deserti (strain DSM 17065 / CIP 109153 / LMG 22923 / VCD115).